The following is a 377-amino-acid chain: MVTKPTTPKPPPALGIPDSAYTVDVRVIDTGTLLHLNPSLFWQPPIDGFTGLHAPIYCFLVSHGSQHVIFDLGVRTDWENYAPKIVSIIKATTTVTPGSDVPSMLDEDTSGLGIRSADIGAVIWSHNHFDHVGDVSRFPLTTDLIVGPGVRGVSWPGWPSNPDGIVLDSDVEGRVVREVSFEAGLKIGHFDAMDFFGDGSFYLLDAPGHAVGHLCALARTTANEPTFVFMGADACHHPGLLRPSNYLPLPSASTLAGVLTGPPQCPGELLQQLTLPDEPFFTVAPRMFPDHDAATDTVRKIQELDASDNCLVLIAHDLSLRDKIPLFPKTINGWKESQVKTETRWLFCNDFMPALHHLDNKQGIEEELGKQSSLKCS.

Zn(2+) contacts are provided by histidine 126, histidine 128, aspartate 130, histidine 131, histidine 209, and aspartate 233.

This sequence belongs to the metallo-beta-lactamase superfamily.

The protein operates within secondary metabolite biosynthesis; terpenoid biosynthesis. In terms of biological role, metallo-hydrolase; part of the gene cluster that mediates the biosynthesis of the phthalide-terpenoid hybrid 11'-O-desmethylfendlerol. Within the pathway, mfma and mfmC act together to convert 3,5-dimethylorsellinic acid (DMOA) into the phthalide 5,7-dihydroxy-4-(hydroxymethyl)-6-methylphthalide. The biosynthesis of 11'-O-desmethylfendlerol begins with the NR-PKS mfmB that forms 3,5-dimethylorsellinic acid (DMOA), which is then transformed into the phthalide 5,7-dihydroxy-4-(hydroxymethyl)-6-methylphthalide by the cytochrome P450 monooxygenase mfmA and the hydrolase mfmC. Subsequently, the methyltransferase mfmE catalyzes 7-O-methylation to yield 5-hydroxy-4-(hydroxymethyl)-7-methoxy-6-methylphthalide, which undergoes C-3 hydroxylation by the cytochrome P450 monooxygenase mfmF. The resultant cyclopolic acid (2,5-dihydroxy-4-(hydroxymethyl)-7-methoxy-6-methylphthalide) is then farnesylated by the DMATS-type prenyltransferase mfmD to afford 5-O-farnesylcyclopolic acid. Finally, the Pyr4-family terpene cyclase mfmH cyclizes the farnesyl moiety of 5-O-farnesylcyclopolic acid into a drimane-like structure, thus completing the biosynthesis of 11'-O-desmethylfendlerol. In Annulohypoxylon moriforme (Filamentous fungus), this protein is Metallo-hydrolase mfmC.